The chain runs to 285 residues: Formate channel FocA (285 aa).

Residues 1–30 (MKADNPFDLLLPAAMAKVAEEAGVYKATKH) are Cytoplasmic-facing. A helical membrane pass occupies residues 31–56 (PLKTFYLAITAGVFISIAFVFYITAT). At 57 to 64 (TGTGTMPF) the chain is on the periplasmic side. A helical membrane pass occupies residues 65 to 85 (GMAKLVGGICFSLGLILCVVC). The Cytoplasmic segment spans residues 86-112 (GADLFTSTVLIVVAKASGRITWGQLAK). The helical transmembrane segment at 113–135 (NWLNVYFGNLVGALLFVLLMWLS) threads the bilayer. The Periplasmic portion of the chain corresponds to 136–160 (GEYMTANGQWGLNVLQTADHKVHHT). Residues 161 to 181 (FIEAVCLGILANLMVCLAVWM) traverse the membrane as a helical segment. At 182–187 (SYSGRS) the chain is on the cytoplasmic side. A helical transmembrane segment spans residues 188–205 (LMDKAFIMVLPVAMFVAS). Over 206-249 (GFEHSIANMFMIPMGIVIRDFASPEFWTAVGSAPENFSHLTVMN) the chain is Periplasmic. The chain crosses the membrane as a helical span at residues 250 to 276 (FITDNLIPVTIGNIIGGGLLVGLTYWV). Topologically, residues 277-285 (IYLRENDHH) are cytoplasmic.

Belongs to the FNT transporter (TC 1.A.16) family. As to quaternary structure, homopentamer.

The protein resides in the cell inner membrane. The enzyme catalyses formate(in) = formate(out). Its function is as follows. Involved in the bidirectional transport of formate during mixed-acid fermentation. Functions to maintain relatively constant intracellular formate levels during growth, using different mechanisms for efflux and uptake of the anion. Is impermeable to water. In Escherichia coli O157:H7, this protein is Formate channel FocA.